Reading from the N-terminus, the 381-residue chain is Queuine tRNA-ribosyltransferase (381 aa).

Asp96 functions as the Proton acceptor in the catalytic mechanism. Substrate contacts are provided by residues 96-100 (DSGGF), Asp150, Gln193, and Gly220. Positions 251 to 257 (GVGSPDA) are RNA binding. The Nucleophile role is filled by Asp270. The interval 275–279 (TRIAR) is RNA binding; important for wobble base 34 recognition. 4 residues coordinate Zn(2+): Cys308, Cys310, Cys313, and His339.

The protein belongs to the queuine tRNA-ribosyltransferase family. Homodimer. Within each dimer, one monomer is responsible for RNA recognition and catalysis, while the other monomer binds to the replacement base PreQ1. Zn(2+) serves as cofactor.

The catalysed reaction is 7-aminomethyl-7-carbaguanine + guanosine(34) in tRNA = 7-aminomethyl-7-carbaguanosine(34) in tRNA + guanine. Its pathway is tRNA modification; tRNA-queuosine biosynthesis. Catalyzes the base-exchange of a guanine (G) residue with the queuine precursor 7-aminomethyl-7-deazaguanine (PreQ1) at position 34 (anticodon wobble position) in tRNAs with GU(N) anticodons (tRNA-Asp, -Asn, -His and -Tyr). Catalysis occurs through a double-displacement mechanism. The nucleophile active site attacks the C1' of nucleotide 34 to detach the guanine base from the RNA, forming a covalent enzyme-RNA intermediate. The proton acceptor active site deprotonates the incoming PreQ1, allowing a nucleophilic attack on the C1' of the ribose to form the product. After dissociation, two additional enzymatic reactions on the tRNA convert PreQ1 to queuine (Q), resulting in the hypermodified nucleoside queuosine (7-(((4,5-cis-dihydroxy-2-cyclopenten-1-yl)amino)methyl)-7-deazaguanosine). This Bacillus velezensis (strain DSM 23117 / BGSC 10A6 / LMG 26770 / FZB42) (Bacillus amyloliquefaciens subsp. plantarum) protein is Queuine tRNA-ribosyltransferase.